The primary structure comprises 352 residues: MDDNKAKALKAALAQIEKQFGKNTIMHLGDDSAALDVDVVSTGSLGLDIALGIGGLPKGRIVEIYGPESSGKTTMTLQAIAECQKQGGVCAFIDAEHALDPVYARKLGVNTDDLLLSQPDNGEQALEITDMLVRSGAIDMIVIDSVAALTPRAEIEGEMGDSHMGLQARLMSQALRKITGNAKRSNCMVLFINQIRMKIGVMFGSPETTTGGNALKFYASVRMDIRRIGAVKNGDEIIGNQTRVKVIKNKMAPPFRQAEFEITYGEGTNHLAEVIDLGVEIGAVGKAGSWYSYGDEKIGQGKANSVLFLKENPAIAEEIEAKIRAEKLGVKDDSKAAVVAETNEELASEPVQ.

66–73 (GPESSGKT) provides a ligand contact to ATP.

It belongs to the RecA family.

Its subcellular location is the cytoplasm. Functionally, can catalyze the hydrolysis of ATP in the presence of single-stranded DNA, the ATP-dependent uptake of single-stranded DNA by duplex DNA, and the ATP-dependent hybridization of homologous single-stranded DNAs. It interacts with LexA causing its activation and leading to its autocatalytic cleavage. The sequence is that of Protein RecA from Psychrobacter arcticus (strain DSM 17307 / VKM B-2377 / 273-4).